A 119-amino-acid polypeptide reads, in one-letter code: uncharacterized protein (119 aa).

2 helical membrane passes run 53-73 (AATI…SFLA) and 92-112 (FITH…WFLF).

Its subcellular location is the membrane. This is an uncharacterized protein from Saccharomyces cerevisiae (strain ATCC 204508 / S288c) (Baker's yeast).